Reading from the N-terminus, the 360-residue chain is Phospho-N-acetylmuramoyl-pentapeptide-transferase (360 aa).

10 consecutive transmembrane segments (helical) span residues 26 to 46, 74 to 94, 97 to 117, 134 to 154, 168 to 188, 199 to 219, 236 to 256, 263 to 283, 288 to 308, and 338 to 358; these read AILG…KLIE, MGGL…GDLG, YVWV…IDDY, YILQ…TAAN, VMPQ…VGSS, GLAI…AYLS, SGEL…FLWF, VFMG…IAVL, ILLV…ILQV, and VIVR…ATLK.

The protein belongs to the glycosyltransferase 4 family. MraY subfamily. Mg(2+) serves as cofactor.

It localises to the cell inner membrane. It carries out the reaction UDP-N-acetyl-alpha-D-muramoyl-L-alanyl-gamma-D-glutamyl-meso-2,6-diaminopimeloyl-D-alanyl-D-alanine + di-trans,octa-cis-undecaprenyl phosphate = di-trans,octa-cis-undecaprenyl diphospho-N-acetyl-alpha-D-muramoyl-L-alanyl-D-glutamyl-meso-2,6-diaminopimeloyl-D-alanyl-D-alanine + UMP. Its pathway is cell wall biogenesis; peptidoglycan biosynthesis. Functionally, catalyzes the initial step of the lipid cycle reactions in the biosynthesis of the cell wall peptidoglycan: transfers peptidoglycan precursor phospho-MurNAc-pentapeptide from UDP-MurNAc-pentapeptide onto the lipid carrier undecaprenyl phosphate, yielding undecaprenyl-pyrophosphoryl-MurNAc-pentapeptide, known as lipid I. In Shewanella oneidensis (strain ATCC 700550 / JCM 31522 / CIP 106686 / LMG 19005 / NCIMB 14063 / MR-1), this protein is Phospho-N-acetylmuramoyl-pentapeptide-transferase.